A 433-amino-acid chain; its full sequence is uncharacterized protein (433 aa).

An N-terminal signal peptide occupies residues 1-26; the sequence is MTRRAEFEMGLFVILQSMFLISLCSS. N-linked (GlcNAc...) asparagine glycans are attached at residues Asn-59, Asn-72, Asn-125, Asn-159, Asn-210, Asn-275, Asn-282, and Asn-323. Ala-405 carries the GPI-anchor amidated alanine lipid modification. The propeptide at 406-433 is removed in mature form; it reads SSQPRLHDEGVTRLVIFVLSMLLVMLLS.

The protein localises to the cell membrane. This is an uncharacterized protein from Arabidopsis thaliana (Mouse-ear cress).